Consider the following 406-residue polypeptide: Imidazolonepropionase (406 aa).

Residues H72 and H74 each coordinate Fe(3+). Residues H72 and H74 each coordinate Zn(2+). Residues R81, Y144, and H177 each contribute to the 4-imidazolone-5-propanoate site. Y144 is an N-formimidoyl-L-glutamate binding site. H242 lines the Fe(3+) pocket. H242 contacts Zn(2+). Residue Q245 coordinates 4-imidazolone-5-propanoate. Residue D317 participates in Fe(3+) binding. D317 is a binding site for Zn(2+). N319 and G321 together coordinate N-formimidoyl-L-glutamate. T322 serves as a coordination point for 4-imidazolone-5-propanoate.

Belongs to the metallo-dependent hydrolases superfamily. HutI family. The cofactor is Zn(2+). Fe(3+) serves as cofactor.

It localises to the cytoplasm. It carries out the reaction 4-imidazolone-5-propanoate + H2O = N-formimidoyl-L-glutamate. It functions in the pathway amino-acid degradation; L-histidine degradation into L-glutamate; N-formimidoyl-L-glutamate from L-histidine: step 3/3. Its function is as follows. Catalyzes the hydrolytic cleavage of the carbon-nitrogen bond in imidazolone-5-propanoate to yield N-formimidoyl-L-glutamate. It is the third step in the universal histidine degradation pathway. This Yersinia pestis bv. Antiqua (strain Antiqua) protein is Imidazolonepropionase.